The following is a 340-amino-acid chain: Glycerol-3-phosphate dehydrogenase [NAD(P)+] (340 aa).

Residues Ser-14, Trp-15, and Lys-109 each coordinate NADPH. Sn-glycerol 3-phosphate is bound by residues Lys-109, Gly-140, and Ser-142. Ala-144 is a binding site for NADPH. Sn-glycerol 3-phosphate is bound by residues Lys-195, Asp-248, Ser-258, Arg-259, and Asn-260. Lys-195 (proton acceptor) is an active-site residue. Arg-259 lines the NADPH pocket. 2 residues coordinate NADPH: Val-283 and Glu-285.

The protein belongs to the NAD-dependent glycerol-3-phosphate dehydrogenase family.

It is found in the cytoplasm. It catalyses the reaction sn-glycerol 3-phosphate + NAD(+) = dihydroxyacetone phosphate + NADH + H(+). The catalysed reaction is sn-glycerol 3-phosphate + NADP(+) = dihydroxyacetone phosphate + NADPH + H(+). The protein operates within membrane lipid metabolism; glycerophospholipid metabolism. Its function is as follows. Catalyzes the reduction of the glycolytic intermediate dihydroxyacetone phosphate (DHAP) to sn-glycerol 3-phosphate (G3P), the key precursor for phospholipid synthesis. In Syntrophobacter fumaroxidans (strain DSM 10017 / MPOB), this protein is Glycerol-3-phosphate dehydrogenase [NAD(P)+].